Consider the following 355-residue polypeptide: WAT1-related protein At3g28130 (355 aa).

10 helical membrane-spanning segments follow: residues 11 to 31, 42 to 62, 80 to 100, 104 to 124, 136 to 156, 186 to 206, 218 to 238, 244 to 264, 290 to 310, and 311 to 331; these read AVLL…NTLF, YTFL…SHIF, IGVL…GIEY, TLAS…AIIF, SVAK…VVLY, WIIG…AFIL, FTVS…IGIV, PSIW…GGIF, LSIL…FYLG, and SLVG…GKAK. The region spanning 29–154 is the EamA domain; sequence TLFKAATSKG…VSLVGALVVV (126 aa).

This sequence belongs to the drug/metabolite transporter (DMT) superfamily. Plant drug/metabolite exporter (P-DME) (TC 2.A.7.4) family.

The protein resides in the membrane. This Arabidopsis thaliana (Mouse-ear cress) protein is WAT1-related protein At3g28130.